Reading from the N-terminus, the 437-residue chain is MSALLPRLLTRTAFKASGKLLRLSSVISRTFSQTTTSYAAAFDRSKPHVNIGTIGHVDHGKTTLTAAITKTLAAKGGANFLDYAAIDKAPEERARGITISTAHVEYETAKRHYSHVDCPGHADYIKNMITGAAQMDGAIIVVAATDGQMPQTREHLLLARQVGVQHIVVFVNKVDTIDDPEMLELVEMEMRELLNEYGFDGDNAPIIMGSALCALEGRQPEIGEQAIMKLLDAVDEYIPTPERDLNKPFLMPVEDIFSISGRGTVVTGRVERGNLKKGEELEIVGHNSTPLKTTVTGIEMFRKELDSAMAGDNAGVLLRGIRRDQLKRGMVLAKPGTVKAHTKILASLYILSKEEGGRHSGFGENYRPQMFIRTADVTVVMRFPKEVEDHSMQVMPGDNVEMECDLIHPTPLEVGQRFNIREGGRTVGTGLITRIIE.

A mitochondrion-targeting transit peptide spans 1–38 (MSALLPRLLTRTAFKASGKLLRLSSVISRTFSQTTTSY). The 197-residue stretch at 46-242 (KPHVNIGTIG…AVDEYIPTPE (197 aa)) folds into the tr-type G domain. Residues 55 to 62 (GHVDHGKT) form a G1 region. 55–62 (GHVDHGKT) is a binding site for GTP. Positions 96 to 100 (GITIS) are G2. The interval 117-120 (DCPG) is G3. GTP contacts are provided by residues 117 to 121 (DCPGH) and 172 to 175 (NKVD). Positions 172-175 (NKVD) are G4. Residues 210 to 212 (SAL) form a G5 region.

This sequence belongs to the TRAFAC class translation factor GTPase superfamily. Classic translation factor GTPase family. EF-Tu/EF-1A subfamily. The precursor is processed in two steps involving mitochondrial intermediate peptidase (MIP) and mitochondrial processing peptidase (MPP).

Its subcellular location is the mitochondrion. It functions in the pathway protein biosynthesis; polypeptide chain elongation. In terms of biological role, G-protein that, in its active GTP-bound form, binds to and delivers aminoacyl-tRNA to the A-site of ribosomes during protein biosynthesis. In the presence of a correct codon-anticodon match between the aminoacyl-tRNA and the A-site codon of the ribosome-bound mRNA, the ribosome acts as a GTPase activator and the GTP is hydrolyzed. The inactive GDP-bound form leaves the ribosome and must be recycled before binding another molecule of aminoacyl-tRNA. Required for mitochondrial protein biosynthesis and maintenance of mitochondrial DNA. In Saccharomyces cerevisiae (strain ATCC 204508 / S288c) (Baker's yeast), this protein is Elongation factor Tu, mitochondrial (TUF1).